A 506-amino-acid polypeptide reads, in one-letter code: Pisatin demethylase (506 aa).

Residue C453 participates in heme binding.

Belongs to the cytochrome P450 family. Heme is required as a cofactor.

Can detoxify the phytoalexin pisatin from garden pea. Pisatin is an antimicrobial compound produced by pea in response to infection by plant pathogens. This is Pisatin demethylase (PDA6-1) from Fusarium vanettenii (Neocosmospora pisi).